The following is a 456-amino-acid chain: Protein trichome birefringence-like 25 (456 aa).

A helical; Signal-anchor for type II membrane protein transmembrane segment spans residues 26-42 (QIFLKSVAFFLLIGLAY). Positions 172-174 (GDS) match the GDS motif motif. A DCXHWCLPGXXDXWN motif motif is present at residues 426 to 440 (DCLHWCLPGPIDSWN).

The protein belongs to the PC-esterase family. TBL subfamily.

The protein localises to the membrane. May be involved in the O-acetylation of mannan. May act as a bridging protein that binds pectin and other cell wall polysaccharides. Probably involved in maintaining esterification of pectins. The protein is Protein trichome birefringence-like 25 (TBL25) of Arabidopsis thaliana (Mouse-ear cress).